The primary structure comprises 228 residues: 2,3-bisphosphoglycerate-dependent phosphoglycerate mutase (228 aa).

Substrate-binding positions include 8–15 (RHGQSEWN), 21–22 (TG), Arg-60, 87–90 (ERHY), Lys-98, 114–115 (RR), and 183–184 (GN). Catalysis depends on His-9, which acts as the Tele-phosphohistidine intermediate. Glu-87 acts as the Proton donor/acceptor in catalysis.

This sequence belongs to the phosphoglycerate mutase family. BPG-dependent PGAM subfamily.

It carries out the reaction (2R)-2-phosphoglycerate = (2R)-3-phosphoglycerate. It participates in carbohydrate degradation; glycolysis; pyruvate from D-glyceraldehyde 3-phosphate: step 3/5. Its function is as follows. Catalyzes the interconversion of 2-phosphoglycerate and 3-phosphoglycerate. This Staphylococcus epidermidis (strain ATCC 35984 / DSM 28319 / BCRC 17069 / CCUG 31568 / BM 3577 / RP62A) protein is 2,3-bisphosphoglycerate-dependent phosphoglycerate mutase.